A 178-amino-acid chain; its full sequence is Large ribosomal subunit protein uL6 (178 aa).

Belongs to the universal ribosomal protein uL6 family. In terms of assembly, part of the 50S ribosomal subunit.

This protein binds to the 23S rRNA, and is important in its secondary structure. It is located near the subunit interface in the base of the L7/L12 stalk, and near the tRNA binding site of the peptidyltransferase center. This chain is Large ribosomal subunit protein uL6, found in Francisella tularensis subsp. tularensis (strain WY96-3418).